We begin with the raw amino-acid sequence, 149 residues long: 3-dehydroquinate dehydratase (149 aa).

Residue Y26 is the Proton acceptor of the active site. Residues N77, H83, and D90 each contribute to the substrate site. The Proton donor role is filled by H103. Substrate contacts are provided by residues 104–105 (LS) and R114.

This sequence belongs to the type-II 3-dehydroquinase family. In terms of assembly, homododecamer.

It catalyses the reaction 3-dehydroquinate = 3-dehydroshikimate + H2O. The protein operates within metabolic intermediate biosynthesis; chorismate biosynthesis; chorismate from D-erythrose 4-phosphate and phosphoenolpyruvate: step 3/7. In terms of biological role, catalyzes a trans-dehydration via an enolate intermediate. The protein is 3-dehydroquinate dehydratase of Aeromonas hydrophila subsp. hydrophila (strain ATCC 7966 / DSM 30187 / BCRC 13018 / CCUG 14551 / JCM 1027 / KCTC 2358 / NCIMB 9240 / NCTC 8049).